We begin with the raw amino-acid sequence, 318 residues long: Taste receptor type 2 member 14 (318 aa).

At 1–7 (MGGVIKN) the chain is on the extracellular side. The chain crosses the membrane as a helical span at residues 8-28 (ISTFVLIVEFIIGNLGNSFIA). The Cytoplasmic segment spans residues 29 to 55 (LVNCIDWVKRRKISLVDQLLTALAISR). Residues 56–76 (ISLVWLIFGSWCVSAFFPALF) traverse the membrane as a helical segment. Over 77 to 87 (ATEKMFRMLTN) the chain is Extracellular. Cholesterol is bound by residues Thr86 and Trp89. The helical transmembrane segment at 88-108 (IWAVTNHFSVWLATGLGTFYF) threads the bilayer. Residues 109-129 (LKIANFSNSIFIYLKWRVKKV) lie on the Cytoplasmic side of the membrane. Residues 130–150 (VLVLLLVTSVFLFLNIALINI) traverse the membrane as a helical segment. At 151-184 (HINASINGYGGNKTCSSDSNDFTRFSSLIALTSS) the chain is on the extracellular side. Asn153 and Asn162 each carry an N-linked (GlcNAc...) asparagine glycan. Ala180 contacts cholesterol. Residues 185 to 205 (VFIFIPFILSLAIFLLLTFSL) traverse the membrane as a helical segment. Topologically, residues 206–232 (WKHCKKMQHTVKASGDASTKAHRGVMQ) are cytoplasmic. Residues 233–253 (TVIAFLLLYPIFSLSFFIAVW) form a helical membrane-spanning segment. The Extracellular segment spans residues 254 to 261 (TSGWLEEN). A helical membrane pass occupies residues 262–282 (LIILSQVMGMAYPSCHSCILI). 2 residues coordinate cholesterol: Leu265 and Val268. Over 283–317 (LGNKKLRQASLSVLWWLKYRFKDGEPSGHKGFRES) the chain is Cytoplasmic.

The protein belongs to the G-protein coupled receptor T2R family. In terms of assembly, core component of the TAS2R14-GNAI1 complex, consisting of TAS2R14, GNAI1, GNB1 and GNG2; within the complex interacts with GNAI1. Core component of the TAS2R14-GNAT3 complex, consisting of TAS2R14, GNAT3, GNB1 and GNG2; within the complex interacts with GNAT3. Core component of the TAS2R14-GNAS2 complex, consisting of TAS2R14, GNAS2, GNB1 and GNG2; within the complex interacts with GNAS2.

The protein resides in the membrane. The catalysed reaction is Ca(2+)(in) = Ca(2+)(out). It catalyses the reaction 3',5'-cyclic AMP(in) = 3',5'-cyclic AMP(out). With respect to regulation, basal activity is enhanced by binding to bitter tastants, such as flufenamic acid and aristolochic acid. Regulated by cholesterol in a concentration-dependent manner. Its function is as follows. Gustducin-linked G-protein coupled receptor that plays a role in the perception of bitterness. The activity of this receptor stimulates GNAT3, activating the gustducin G-protein pathway. Likely plays a role in sensing the chemical composition of the gastrointestinal content and other extra-oral tissues via the inhibitory G-protein pathways. This chain is Taste receptor type 2 member 14 (TAS2R14), found in Pongo pygmaeus (Bornean orangutan).